Reading from the N-terminus, the 168-residue chain is Peptide deformylase 2 (168 aa).

2 residues coordinate Fe cation: cysteine 91 and histidine 133. The active site involves glutamate 134. Histidine 137 contacts Fe cation.

It belongs to the polypeptide deformylase family. It depends on Fe(2+) as a cofactor.

It catalyses the reaction N-terminal N-formyl-L-methionyl-[peptide] + H2O = N-terminal L-methionyl-[peptide] + formate. In terms of biological role, removes the formyl group from the N-terminal Met of newly synthesized proteins. Requires at least a dipeptide for an efficient rate of reaction. N-terminal L-methionine is a prerequisite for activity but the enzyme has broad specificity at other positions. In Vibrio cholerae serotype O1 (strain ATCC 39315 / El Tor Inaba N16961), this protein is Peptide deformylase 2.